The primary structure comprises 250 residues: 2,3-bisphosphoglycerate-dependent phosphoglycerate mutase (250 aa).

Substrate is bound by residues 10–17 (RHGESEWN), 23–24 (TG), arginine 62, 89–92 (ERHY), lysine 100, 116–117 (RR), and 185–186 (GN). The active-site Tele-phosphohistidine intermediate is histidine 11. Residue glutamate 89 is the Proton donor/acceptor of the active site.

This sequence belongs to the phosphoglycerate mutase family. BPG-dependent PGAM subfamily. In terms of assembly, homodimer.

It catalyses the reaction (2R)-2-phosphoglycerate = (2R)-3-phosphoglycerate. Its pathway is carbohydrate degradation; glycolysis; pyruvate from D-glyceraldehyde 3-phosphate: step 3/5. Catalyzes the interconversion of 2-phosphoglycerate and 3-phosphoglycerate. This is 2,3-bisphosphoglycerate-dependent phosphoglycerate mutase from Edwardsiella ictaluri (strain 93-146).